The following is a 346-amino-acid chain: Tryptophan--tRNA ligase (346 aa).

Residues 11–13 (RPT) and 19–20 (GH) contribute to the ATP site. The short motif at 12–20 (PTGKLHLGH) is the 'HIGH' region element. Asp143 provides a ligand contact to L-tryptophan. ATP is bound by residues 155-157 (GKD), Leu193, and 201-205 (KMSKS). A 'KMSKS' region motif is present at residues 201 to 205 (KMSKS).

The protein belongs to the class-I aminoacyl-tRNA synthetase family. Homodimer.

It is found in the cytoplasm. The catalysed reaction is tRNA(Trp) + L-tryptophan + ATP = L-tryptophyl-tRNA(Trp) + AMP + diphosphate + H(+). Catalyzes the attachment of tryptophan to tRNA(Trp). The chain is Tryptophan--tRNA ligase from Chlamydia muridarum (strain MoPn / Nigg).